The following is a 197-amino-acid chain: Holliday junction branch migration complex subunit RuvA (197 aa).

The domain I stretch occupies residues 1 to 63 (MYAYLKGIIT…EDAHLLYGFR (63 aa)). The domain II stretch occupies residues 64–142 (SEDEKKLFLS…VAGDDLPAKV (79 aa)). The tract at residues 143 to 147 (AVQAS) is flexible linker. The interval 148–197 (AENQELEEAMEAMLALGYKATELKKIKKFFEGTTDTAENYIKSALKMLVK) is domain III.

The protein belongs to the RuvA family. Homotetramer. Forms an RuvA(8)-RuvB(12)-Holliday junction (HJ) complex. HJ DNA is sandwiched between 2 RuvA tetramers; dsDNA enters through RuvA and exits via RuvB. An RuvB hexamer assembles on each DNA strand where it exits the tetramer. Each RuvB hexamer is contacted by two RuvA subunits (via domain III) on 2 adjacent RuvB subunits; this complex drives branch migration. In the full resolvosome a probable DNA-RuvA(4)-RuvB(12)-RuvC(2) complex forms which resolves the HJ.

The protein localises to the cytoplasm. Its function is as follows. The RuvA-RuvB-RuvC complex processes Holliday junction (HJ) DNA during genetic recombination and DNA repair, while the RuvA-RuvB complex plays an important role in the rescue of blocked DNA replication forks via replication fork reversal (RFR). RuvA specifically binds to HJ cruciform DNA, conferring on it an open structure. The RuvB hexamer acts as an ATP-dependent pump, pulling dsDNA into and through the RuvAB complex. HJ branch migration allows RuvC to scan DNA until it finds its consensus sequence, where it cleaves and resolves the cruciform DNA. The chain is Holliday junction branch migration complex subunit RuvA from Streptococcus pneumoniae serotype 19F (strain G54).